The following is a 568-amino-acid chain: Proline--tRNA ligase (568 aa).

Belongs to the class-II aminoacyl-tRNA synthetase family. ProS type 1 subfamily. Homodimer.

Its subcellular location is the cytoplasm. It catalyses the reaction tRNA(Pro) + L-proline + ATP = L-prolyl-tRNA(Pro) + AMP + diphosphate. Functionally, catalyzes the attachment of proline to tRNA(Pro) in a two-step reaction: proline is first activated by ATP to form Pro-AMP and then transferred to the acceptor end of tRNA(Pro). As ProRS can inadvertently accommodate and process non-cognate amino acids such as alanine and cysteine, to avoid such errors it has two additional distinct editing activities against alanine. One activity is designated as 'pretransfer' editing and involves the tRNA(Pro)-independent hydrolysis of activated Ala-AMP. The other activity is designated 'posttransfer' editing and involves deacylation of mischarged Ala-tRNA(Pro). The misacylated Cys-tRNA(Pro) is not edited by ProRS. The polypeptide is Proline--tRNA ligase (Listeria monocytogenes serotype 4b (strain F2365)).